The primary structure comprises 735 residues: Receptor-type guanylate cyclase gcy-27 (735 aa).

Asn11 is a glycosylation site (N-linked (GlcNAc...) asparagine). The chain crosses the membrane as a helical span at residues 28–48; the sequence is FIICTLPVPIYFVVVAIWTIN. Positions 188-465 constitute a Protein kinase domain; sequence ALTSRRRVFG…IENLRNAIAI (278 aa). The 131-residue stretch at 538 to 668 folds into the Guanylate cyclase domain; sequence TVMFVQICDF…DTVNFASRMQ (131 aa).

Belongs to the adenylyl cyclase class-4/guanylyl cyclase family. In terms of tissue distribution, expressed bilaterally in ASK, ASI and ASJ sensory neurons.

Its subcellular location is the cell membrane. The enzyme catalyses GTP = 3',5'-cyclic GMP + diphosphate. In terms of biological role, guanylate cyclase involved in the production of the second messenger cGMP. May be involved in sensitivity to quinine by regulating egl-4 activity through the production of cGMP. Promotes the calcium flux to the cytoplasm in ASJ sensory neurons upon removal of a nitric oxide (NO) stimulus and is thereby involved in the behavioral avoidance response to NO-producing organisms like P.aeruginosa. This Caenorhabditis elegans protein is Receptor-type guanylate cyclase gcy-27.